The primary structure comprises 209 residues: Probable glutathione peroxidase 8 (209 aa).

M1 bears the N-acetylmethionine mark. The chain crosses the membrane as a helical span at residues 18–40; the sequence is IFAVLLSMVLCTVMLFLLQLKFL. C79 is an active-site residue.

The protein belongs to the glutathione peroxidase family.

It localises to the membrane. It catalyses the reaction 2 glutathione + H2O2 = glutathione disulfide + 2 H2O. The protein is Probable glutathione peroxidase 8 (Gpx8) of Mus musculus (Mouse).